Consider the following 246-residue polypeptide: E3 ubiquitin-protein ligase RNF182 (246 aa).

The RING-type zinc-finger motif lies at 22-70 (CKICYNRYNLRQRKPKVLGCCHRVCAKCLYKLVDCGESPQCVIVCPFCR). Transmembrane regions (helical) follow at residues 184 to 204 (VFVW…IYLL) and 211 to 231 (LGVV…IYGF).

Interacts with ATP6V0C.

Its subcellular location is the membrane. The protein resides in the cytoplasm. It catalyses the reaction S-ubiquitinyl-[E2 ubiquitin-conjugating enzyme]-L-cysteine + [acceptor protein]-L-lysine = [E2 ubiquitin-conjugating enzyme]-L-cysteine + N(6)-ubiquitinyl-[acceptor protein]-L-lysine.. The protein operates within protein modification; protein ubiquitination. Its function is as follows. E3 ubiquitin-protein ligase that mediates the ubiquitination of atp6v0c and targets it to degradation via the ubiquitin-proteasome pathway. This Xenopus laevis (African clawed frog) protein is E3 ubiquitin-protein ligase RNF182 (rnf182).